The chain runs to 1125 residues: Probable inorganic carbon transporter subunit DabA (1125 aa).

Zn(2+)-binding residues include Cys-578, Asp-580, His-769, and Cys-784. Residues 1106-1125 are disordered; that stretch reads SDPRPPALVEPKQTETHHAA.

The protein belongs to the inorganic carbon transporter (TC 9.A.2) DabA family. Forms a complex with DabB. It depends on Zn(2+) as a cofactor.

The protein localises to the cell inner membrane. In terms of biological role, part of an energy-coupled inorganic carbon pump. The sequence is that of Probable inorganic carbon transporter subunit DabA from Nitrosococcus oceani (strain ATCC 19707 / BCRC 17464 / JCM 30415 / NCIMB 11848 / C-107).